The primary structure comprises 205 residues: Holliday junction branch migration complex subunit RuvA (205 aa).

A domain I region spans residues 1 to 64; it reads MIGRLKGILV…EDAQLLYGFI (64 aa). Positions 65 to 143 are domain II; the sequence is HKEERSLFRL…SLMEASMGAE (79 aa). The interval 144 to 156 is flexible linker; that stretch reads REFVLKSNFTPAP. The interval 157–205 is domain III; sequence VAATVEEDAIAALLSLGYKPQQASKAVSSAFQEGMDPEQLIKAALKSML.

Belongs to the RuvA family. As to quaternary structure, homotetramer. Forms an RuvA(8)-RuvB(12)-Holliday junction (HJ) complex. HJ DNA is sandwiched between 2 RuvA tetramers; dsDNA enters through RuvA and exits via RuvB. An RuvB hexamer assembles on each DNA strand where it exits the tetramer. Each RuvB hexamer is contacted by two RuvA subunits (via domain III) on 2 adjacent RuvB subunits; this complex drives branch migration. In the full resolvosome a probable DNA-RuvA(4)-RuvB(12)-RuvC(2) complex forms which resolves the HJ.

The protein localises to the cytoplasm. The RuvA-RuvB-RuvC complex processes Holliday junction (HJ) DNA during genetic recombination and DNA repair, while the RuvA-RuvB complex plays an important role in the rescue of blocked DNA replication forks via replication fork reversal (RFR). RuvA specifically binds to HJ cruciform DNA, conferring on it an open structure. The RuvB hexamer acts as an ATP-dependent pump, pulling dsDNA into and through the RuvAB complex. HJ branch migration allows RuvC to scan DNA until it finds its consensus sequence, where it cleaves and resolves the cruciform DNA. This is Holliday junction branch migration complex subunit RuvA from Shewanella amazonensis (strain ATCC BAA-1098 / SB2B).